Here is a 166-residue protein sequence, read N- to C-terminus: Large ribosomal subunit protein uL10 (166 aa).

This sequence belongs to the universal ribosomal protein uL10 family. As to quaternary structure, part of the ribosomal stalk of the 50S ribosomal subunit. The N-terminus interacts with L11 and the large rRNA to form the base of the stalk. The C-terminus forms an elongated spine to which L12 dimers bind in a sequential fashion forming a multimeric L10(L12)X complex.

In terms of biological role, forms part of the ribosomal stalk, playing a central role in the interaction of the ribosome with GTP-bound translation factors. The protein is Large ribosomal subunit protein uL10 of Stutzerimonas stutzeri (strain A1501) (Pseudomonas stutzeri).